Consider the following 139-residue polypeptide: uncharacterized protein (139 aa).

The next 3 helical transmembrane spans lie at 19-39, 64-84, and 89-109; these read CIIF…FILG, IFNV…FNLF, and AITI…WILG.

It localises to the cell membrane. This is an uncharacterized protein from Methanocaldococcus jannaschii (strain ATCC 43067 / DSM 2661 / JAL-1 / JCM 10045 / NBRC 100440) (Methanococcus jannaschii).